The following is a 496-amino-acid chain: Cytochrome P450 71D18 (496 aa).

Residues 2–22 (ELDLLSAIIILVATYIVSLLI) traverse the membrane as a helical; Signal-anchor for type II membrane protein segment. A heme-binding site is contributed by C436.

Belongs to the cytochrome P450 family. The cofactor is heme.

Its subcellular location is the endoplasmic reticulum membrane. It catalyses the reaction (4S)-limonene + reduced [NADPH--hemoprotein reductase] + O2 = (1S,5R)-carveol + oxidized [NADPH--hemoprotein reductase] + H2O + H(+). Functionally, hydroxylates (-)-(4S)-limonene to (-)-trans-carveol, a precursor of (-)-carvone. Fluorinated substrate analogs are hydroxylated with the same regio- and stereochemistry. The polypeptide is Cytochrome P450 71D18 (CYP71D18) (Mentha gracilis (Gingermint)).